Consider the following 181-residue polypeptide: uncharacterized protein (181 aa).

Residues 133–153 traverse the membrane as a helical segment; it reads MCVCVHVCACVYVCMCVLVCM.

It is found in the membrane. This is an uncharacterized protein from Homo sapiens (Human).